The primary structure comprises 904 residues: Pentatricopeptide repeat-containing protein At4g30825, chloroplastic (904 aa).

The N-terminal 61 residues, 1 to 61 (MGSLRFSIPL…SSTRVLDKIR (61 aa)), are a transit peptide targeting the chloroplast. The interval 75–94 (NSASAAPVERSRSSKLSGDQ) is disordered. PPR repeat units lie at residues 173-203 (NFVA…LCGF), 209-243 (SYQV…GVRP), 244-274 (NVAT…MRKF), 278-312 (CESA…RVRL), 313-347 (KLEN…GFSP), 348-382 (NIIA…GLEP), 383-417 (DETS…GYKP), 418-452 (NSFN…GCQY), 487-521 (NQTS…DSAF), 522-553 (ESHL…MESD), 557-591 (NLHI…GVVL), 592-622 (DRIG…MDEQ), 628-662 (DVYL…GIHW), 663-697 (NQEM…GFTP), 698-732 (NTVT…GVVD), 733-766 (VISY…GFSV), 767-801 (SLEA…TSGP), 802-836 (DHYT…GLGP), 837-871 (DLCS…NIIP), and 872-904 (DKVT…QMGI).

This sequence belongs to the PPR family. P subfamily.

It localises to the plastid. The protein localises to the chloroplast. This chain is Pentatricopeptide repeat-containing protein At4g30825, chloroplastic, found in Arabidopsis thaliana (Mouse-ear cress).